The sequence spans 203 residues: MIIKENSDKQTQIYNFLIEFTKSKGYPPSVREICQAVSLKSTSTVHGHLKRLEKKGLIYRDPTKPRALEIVELSNEEKELIDIPIVGKVTAGMPILATENIEDMFQMPINYVKHNNDLFILKVTGDSMIEAGILDGDLAIIEQKNVATNGDIVVALIENEATIKRFFKENGFIRLQPENKNYEPIIVEDCSILGKLVGIYRAY.

Positions 30 to 50 (VREICQAVSLKSTSTVHGHLK) form a DNA-binding region, H-T-H motif. Active-site for autocatalytic cleavage activity residues include Ser127 and Lys164.

It belongs to the peptidase S24 family. As to quaternary structure, homodimer.

The enzyme catalyses Hydrolysis of Ala-|-Gly bond in repressor LexA.. In terms of biological role, represses a number of genes involved in the response to DNA damage (SOS response), including recA and lexA. In the presence of single-stranded DNA, RecA interacts with LexA causing an autocatalytic cleavage which disrupts the DNA-binding part of LexA, leading to derepression of the SOS regulon and eventually DNA repair. The protein is LexA repressor of Clostridium perfringens (strain 13 / Type A).